Consider the following 579-residue polypeptide: Probable cytochrome c biosynthesis protein (579 aa).

It belongs to the CcmF/CycK/Ccl1/NrfE/CcsA family.

The protein resides in the mitochondrion. Its function is as follows. Could be involved in assembly and maturation of cytochromes c. May play a role in guidance of apocytochromes and heme groups for the covalent linkage introduced by the cytochrome-c-heme lyase. The chain is Probable cytochrome c biosynthesis protein from Daucus carota (Wild carrot).